A 274-amino-acid polypeptide reads, in one-letter code: MSYGPLDMYRNPGPSGPQPRDFNSIIQTCSGNIQRISQATAQIKNLMSQLGTKQDSSKLQENLQQFQHSTNQLAKETNELLKELGSLPLPLSASEQRQQKLQKERLMNDFSSALNNFQVVQRKVSEKEKESIARARAGSRLSAEDRQREEQLVSFDSHEEWNQMQSQEEEAAITEQDLELIKERETAIQQLEADILDVNQIFKDLAMMIHDQGDLIDSIEANVESSEVHVERASDQLQRAAYYQKKSRKKMCILVLVLSVIVTVLVVVIWVASK.

Residues 1 to 20 (MSYGPLDMYRNPGPSGPQPR) are disordered. At serine 2 the chain carries N-acetylserine. Residues 2-250 (SYGPLDMYRN…AYYQKKSRKK (249 aa)) are Cytoplasmic-facing. Residues 34–80 (QRISQATAQIKNLMSQLGTKQDSSKLQENLQQFQHSTNQLAKETNEL) adopt a coiled-coil conformation. The tract at residues 128 to 150 (EKESIARARAGSRLSAEDRQREE) is disordered. Serine 139, serine 142, serine 218, and serine 225 each carry phosphoserine. The 63-residue stretch at 178–240 (LELIKERETA…ERASDQLQRA (63 aa)) folds into the t-SNARE coiled-coil homology domain. A helical; Anchor for type IV membrane protein membrane pass occupies residues 251–271 (MCILVLVLSVIVTVLVVVIWV). Residues 272-274 (ASK) are Vesicular-facing.

The protein belongs to the syntaxin family. In terms of assembly, associates with the BLOC-1 complex. Interacts with BLOC1S6. Interacts with NAPA and SNAP23. Identified in a complex containing STX6, STX12, VAMP4 and VTI1A. Interacts with GRIPAP1. Forms a complex with GRIP1, GRIA2 and NSG1; controls the intracellular fate of AMPAR and the endosomal sorting of the GRIA2 subunit toward recycling and membrane targeting. Interacts with NSG1. Interacts with TPC1. Interacts (via N-terminus) with VPS13B. Ubiquitous. Highly expressed in brain.

It is found in the endosome membrane. The protein localises to the golgi apparatus membrane. Its subcellular location is the endomembrane system. The protein resides in the early endosome membrane. It localises to the recycling endosome membrane. Functionally, SNARE promoting fusion of transport vesicles with target membranes. Together with SNARE STX6, promotes movement of vesicles from endosomes to the cell membrane, and may therefore function in the endocytic recycling pathway. Through complex formation with GRIP1, GRIA2 and NSG1 controls the intracellular fate of AMPAR and the endosomal sorting of the GRIA2 subunit toward recycling and membrane targeting. In Rattus norvegicus (Rat), this protein is Syntaxin-12 (Stx12).